The chain runs to 514 residues: 2,3-bisphosphoglycerate-independent phosphoglycerate mutase (514 aa).

The Mn(2+) site is built by D14 and S64. S64 functions as the Phosphoserine intermediate in the catalytic mechanism. Residues H125, 155 to 156 (RD), R187, R193, 263 to 266 (RADR), and K336 contribute to the substrate site. Positions 403, 407, 444, 445, and 463 each coordinate Mn(2+).

This sequence belongs to the BPG-independent phosphoglycerate mutase family. Monomer. The cofactor is Mn(2+).

The enzyme catalyses (2R)-2-phosphoglycerate = (2R)-3-phosphoglycerate. The protein operates within carbohydrate degradation; glycolysis; pyruvate from D-glyceraldehyde 3-phosphate: step 3/5. Insensitive to vanadate. In terms of biological role, catalyzes the interconversion of 2-phosphoglycerate (2-PGA) and 3-phosphoglycerate (3-PGA). This chain is 2,3-bisphosphoglycerate-independent phosphoglycerate mutase, found in Escherichia coli (strain K12).